The following is a 254-amino-acid chain: Alcohol dehydrogenase (254 aa).

10–33 is an NAD(+) binding site; the sequence is FVAGLGGIGLDTSRELVKRDLKNL. Ser-138 is a binding site for substrate. Tyr-151 (proton acceptor) is an active-site residue.

This sequence belongs to the short-chain dehydrogenases/reductases (SDR) family. As to quaternary structure, homodimer.

The catalysed reaction is a primary alcohol + NAD(+) = an aldehyde + NADH + H(+). The enzyme catalyses a secondary alcohol + NAD(+) = a ketone + NADH + H(+). The protein is Alcohol dehydrogenase (Adh) of Drosophila subobscura (Fruit fly).